The sequence spans 194 residues: uncharacterized protein (194 aa).

An HTH tetR-type domain is found at 2–62 (QGPRERMVVS…CEAVDYAGEH (61 aa)). The segment at residues 25–44 (AISDVLQHSGAPRGSAYHYF) is a DNA-binding region (H-T-H motif).

This is an uncharacterized protein from Mycobacterium tuberculosis (strain CDC 1551 / Oshkosh).